Consider the following 145-residue polypeptide: Methylglyoxal synthase (145 aa).

An MGS-like domain is found at 1-145; the sequence is MNSKKKIALV…YYQKIRKDNF (145 aa). Substrate-binding positions include histidine 12, lysine 16, 38–41, and 58–59; these read TGTT and SG. Aspartate 64 (proton donor/acceptor) is an active-site residue. Residue histidine 91 coordinates substrate.

This sequence belongs to the methylglyoxal synthase family.

It catalyses the reaction dihydroxyacetone phosphate = methylglyoxal + phosphate. Its function is as follows. Catalyzes the formation of methylglyoxal from dihydroxyacetone phosphate. The chain is Methylglyoxal synthase from Clostridium acetobutylicum (strain ATCC 824 / DSM 792 / JCM 1419 / IAM 19013 / LMG 5710 / NBRC 13948 / NRRL B-527 / VKM B-1787 / 2291 / W).